A 128-amino-acid chain; its full sequence is MAEITREQVVDYLSNLPVIQIAELIKDLENKWGVKAAPAAVAVAAGPAAAAPAEKAPEQTEFDVVLANAGSNKIGVIKAIREITGLGLKEAKDLVEAAPKTVKEQVSKADAEEMKKKLVEAGATVELK.

The protein belongs to the bacterial ribosomal protein bL12 family. As to quaternary structure, homodimer. Part of the ribosomal stalk of the 50S ribosomal subunit. Forms a multimeric L10(L12)X complex, where L10 forms an elongated spine to which 2 to 4 L12 dimers bind in a sequential fashion. Binds GTP-bound translation factors.

Functionally, forms part of the ribosomal stalk which helps the ribosome interact with GTP-bound translation factors. Is thus essential for accurate translation. The sequence is that of Large ribosomal subunit protein bL12 from Sorangium cellulosum (strain So ce56) (Polyangium cellulosum (strain So ce56)).